Here is a 347-residue protein sequence, read N- to C-terminus: KIN17-like protein KLP (347 aa).

The short motif at 222 to 225 (KRKR) is the Nuclear localization signal (NLS) element.

Belongs to the KIN17 family.

Its subcellular location is the cytoplasm. It localises to the nucleus. Functionally, may act as repressor of root growth during copper excess and of hypocotyl growth in the dark. This Arabidopsis thaliana (Mouse-ear cress) protein is KIN17-like protein KLP.